Reading from the N-terminus, the 242-residue chain is Succinyl-CoA:3-ketoacid coenzyme A transferase subunit A (242 aa).

33-39 (GGFGLCG) provides a ligand contact to CoA.

The protein belongs to the 3-oxoacid CoA-transferase subunit A family. In terms of assembly, heterodimer of a subunit A and a subunit B.

It catalyses the reaction a 3-oxo acid + succinyl-CoA = a 3-oxoacyl-CoA + succinate. Its pathway is bacterial outer membrane biogenesis; lipopolysaccharide biosynthesis. The sequence is that of Succinyl-CoA:3-ketoacid coenzyme A transferase subunit A (lpsI) from Xanthomonas campestris pv. campestris (strain B100).